The primary structure comprises 1309 residues: Disease resistance protein RPP2A (1309 aa).

Residues 9-173 (RRYDVFPSFS…MVADDVSKKL (165 aa)) enclose the TIR 1 domain. The active site involves Glu84. Positions 187-418 (EAHLEAMSSI…FKKTLRNYLP (232 aa)) constitute an NB-ARC 1 domain. The ALOG domain occupies 488-585 (PNRRHSNDDW…KECILVFSCH (98 aa)). In terms of domain architecture, TIR 2 spans 574 to 737 (REKECILVFS…EVVRNASLRL (164 aa)). An NB-ARC 2 domain is found at 755-987 (SQSTDVEIMG…IFLDLACFFR (233 aa)). Residues 1114–1141 (LPHGLDTLPDELSLLHWENYPLVYLPQK) are a coiled coil. 6 LRR repeats span residues 1145 to 1167 (VNLVELNMPYSNMEKLWEGKKNL), 1168 to 1195 (EKLKNIKLSHSRELTDILMLSEALNLEH), 1214 to 1237 (CGKLVSLNMKDCSRLRSLPSMVDL), 1238 to 1258 (TTLKLLNLSGCSEFEDIQDFA), 1259 to 1283 (PNLEEIYLAGTSIRELPLSIRNLTE), and 1285 to 1307 (VTLDLENCERLQEMPSLPVEIIR).

The protein belongs to the disease resistance TIR-NB-LRR family.

It carries out the reaction NAD(+) + H2O = ADP-D-ribose + nicotinamide + H(+). In terms of biological role, disease resistance protein that cooperates with RPP2B to confer resistance to Hyaloperonospora parasitica isolate Cala2. The chain is Disease resistance protein RPP2A from Arabidopsis thaliana (Mouse-ear cress).